Consider the following 230-residue polypeptide: uncharacterized protein (230 aa).

Positions 118–195 (LLDEILPKEP…SKREMERLER (78 aa)) are disordered. Residues 136–146 (QKKKEKRAALK) show a composition bias toward basic residues. 2 stretches are compositionally biased toward basic and acidic residues: residues 160–170 (ETDLYGDRDSF) and 179–195 (QRSE…RLER).

This is an uncharacterized protein from Schizosaccharomyces pombe (strain 972 / ATCC 24843) (Fission yeast).